We begin with the raw amino-acid sequence, 517 residues long: Xyloglucan galactosyltransferase XLT2 (517 aa).

The segment at 1-31 (MLPVSNPSSPEHLLKKSRTPDSTTSIDRKNS) is disordered. Over 1–49 (MLPVSNPSSPEHLLKKSRTPDSTTSIDRKNSFNSLHSVGNRSSYIAASR) the chain is Cytoplasmic. A compositionally biased stretch (polar residues) spans 20 to 31 (PDSTTSIDRKNS). The chain crosses the membrane as a helical; Signal-anchor for type II membrane protein span at residues 50-70 (SHCTWLILSLLSLQLILFLTL). The Lumenal portion of the chain corresponds to 71 to 517 (RSIPFPHRHI…KEQEKWYKWR (447 aa)). N-linked (GlcNAc...) asparagine glycans are attached at residues Asn250, Asn288, Asn377, and Asn449.

The protein belongs to the glycosyltransferase 47 family. As to quaternary structure, interacts with CSLC4, FUT1, XXT2 and XXT5. Expressed in roots, hypocotyls, cotyledons, leaves, stems and flowers.

Its subcellular location is the golgi apparatus membrane. Its function is as follows. Functions in xyloglucan synthesis by adding side chains to the xylosylated glucan backbone. Involved in galactosylating hemicellulose xyloglucan (XyG) at the second position of the XXXG motif to form XLXG. Associates with other xyloglucan-synthesizing enzymes to form multiprotein complexes for xyloglucan synthesis in the Golgi. The polypeptide is Xyloglucan galactosyltransferase XLT2 (Arabidopsis thaliana (Mouse-ear cress)).